The following is a 566-amino-acid chain: Membrane protein insertase YidC (566 aa).

Transmembrane regions (helical) follow at residues 3–23, 346–366, 369–389, 436–456, and 509–529; these read IKRIILYVIVALLAIALFNAW, GWLWPISMLLFWILSAVHAVV, WGWSIIITTILIKIVFYWFSA, GGCLPMLIQVPVFIAFYYVII, and MWILPVIFTVFFINFPAGLVL.

This sequence belongs to the OXA1/ALB3/YidC family. Type 1 subfamily. In terms of assembly, interacts with the Sec translocase complex via SecD. Specifically interacts with transmembrane segments of nascent integral membrane proteins during membrane integration.

It is found in the cell inner membrane. Required for the insertion and/or proper folding and/or complex formation of integral membrane proteins into the membrane. Involved in integration of membrane proteins that insert both dependently and independently of the Sec translocase complex, as well as at least some lipoproteins. Aids folding of multispanning membrane proteins. In Coxiella burnetii (strain CbuK_Q154) (Coxiella burnetii (strain Q154)), this protein is Membrane protein insertase YidC.